A 588-amino-acid chain; its full sequence is Sperm-associated microtubule inner protein 4 (588 aa).

T219 is modified (phosphothreonine). Residues S406, S421, and S427 each carry the phosphoserine modification. Y441 carries the phosphotyrosine modification. Residues S457, S484, and S516 each carry the phosphoserine modification.

As to expression, predominantly expressed in the testes.

The protein localises to the cytoplasm. It localises to the cytoskeleton. Its subcellular location is the microtubule organizing center. The protein resides in the centrosome. It is found in the flagellum axoneme. In terms of biological role, microtubule inner protein (MIP) part of the dynein-decorated doublet microtubules (DMTs) in flagellum axoneme. May serve to reinforce and thus stabilize the microtubule structure in the sperm flagella. The sequence is that of Sperm-associated microtubule inner protein 4 (Spmip4) from Mus musculus (Mouse).